Here is a 277-residue protein sequence, read N- to C-terminus: Large ribosomal subunit protein uL2 (277 aa).

Positions 222-277 (GVAMNPVDHPHGGGEGRTSGGRHPVSPWGKPTKGKRTRSNKATDKFIMRSRHQRKK) are disordered.

This sequence belongs to the universal ribosomal protein uL2 family. In terms of assembly, part of the 50S ribosomal subunit. Forms a bridge to the 30S subunit in the 70S ribosome.

In terms of biological role, one of the primary rRNA binding proteins. Required for association of the 30S and 50S subunits to form the 70S ribosome, for tRNA binding and peptide bond formation. It has been suggested to have peptidyltransferase activity; this is somewhat controversial. Makes several contacts with the 16S rRNA in the 70S ribosome. The sequence is that of Large ribosomal subunit protein uL2 from Bartonella bacilliformis (strain ATCC 35685 / KC583 / Herrer 020/F12,63).